We begin with the raw amino-acid sequence, 282 residues long: Acetyl-coenzyme A carboxylase carboxyl transferase subunit beta (282 aa).

The CoA carboxyltransferase N-terminal domain maps to 29-282; the sequence is LMQRCPNCGL…LLKYGGMQDD (254 aa). Zn(2+) is bound by residues cysteine 33, cysteine 36, cysteine 51, and cysteine 54. The C4-type zinc-finger motif lies at 33–54; that stretch reads CPNCGLEFFARRLDKYKTCPDC.

It belongs to the AccD/PCCB family. In terms of assembly, acetyl-CoA carboxylase is a heterohexamer composed of biotin carboxyl carrier protein (AccB), biotin carboxylase (AccC) and two subunits each of ACCase subunit alpha (AccA) and ACCase subunit beta (AccD). Zn(2+) is required as a cofactor.

It is found in the cytoplasm. It carries out the reaction N(6)-carboxybiotinyl-L-lysyl-[protein] + acetyl-CoA = N(6)-biotinyl-L-lysyl-[protein] + malonyl-CoA. It functions in the pathway lipid metabolism; malonyl-CoA biosynthesis; malonyl-CoA from acetyl-CoA: step 1/1. Component of the acetyl coenzyme A carboxylase (ACC) complex. Biotin carboxylase (BC) catalyzes the carboxylation of biotin on its carrier protein (BCCP) and then the CO(2) group is transferred by the transcarboxylase to acetyl-CoA to form malonyl-CoA. The protein is Acetyl-coenzyme A carboxylase carboxyl transferase subunit beta of Lactobacillus delbrueckii subsp. bulgaricus (strain ATCC BAA-365 / Lb-18).